Reading from the N-terminus, the 370-residue chain is Luciferin sulfotransferase (370 aa).

90–95 (KAGTTW) contacts 3'-phosphoadenylyl sulfate. The Proton acceptor role is filled by histidine 165. Residues arginine 189, serine 197, tyrosine 250, 284–289 (LSFESM), and 316–320 (FMRSG) each bind 3'-phosphoadenylyl sulfate.

This sequence belongs to the sulfotransferase 1 family.

It carries out the reaction firefly D-luciferin + 3'-phosphoadenylyl sulfate = firefly D-sulfoluciferin + adenosine 3',5'-bisphosphate + H(+). The enzyme catalyses firefly L-luciferin + 3'-phosphoadenylyl sulfate = firefly L-sulfoluciferin + adenosine 3',5'-bisphosphate + H(+). Sulfoluciferin formation is inhibited by the product adenosine 3',5'-bisphosphate. Its function is as follows. Catalyzes the production of firefly sulfoluciferin from luciferin using the sulfo-donor 3'-phosphoadenylyl sulfate (PAPS). Is also able to catalyze the reverse reaction, i.e. the adenosine 3',5'-bisphosphate-dependent desulfonation of sulfoluciferin. Can use either D- or L-luciferin stereoisomer as substrate. Sulfoluciferin, which is not a substrate of P.pyralis luciferase, likely serves as a luciferin storage form in fireflies. The chain is Luciferin sulfotransferase from Photinus pyralis (Common eastern firefly).